A 199-amino-acid chain; its full sequence is NAD(P)H dehydrogenase (quinone) (199 aa).

Residues 4–190 (VLVLYYSAYG…NGARYQGRTI (187 aa)) form the Flavodoxin-like domain. Residues 10 to 15 (SAYGHI) and 78 to 80 (TRF) each bind FMN. Y12 contacts NAD(+). Position 98 (W98) interacts with substrate. Residues 113–119 (STATQHG) and H134 each bind FMN.

This sequence belongs to the WrbA family. It depends on FMN as a cofactor.

The enzyme catalyses a quinone + NADH + H(+) = a quinol + NAD(+). The catalysed reaction is a quinone + NADPH + H(+) = a quinol + NADP(+). This is NAD(P)H dehydrogenase (quinone) from Afipia carboxidovorans (strain ATCC 49405 / DSM 1227 / KCTC 32145 / OM5) (Oligotropha carboxidovorans).